A 199-amino-acid polypeptide reads, in one-letter code: Pyridoxal 5'-phosphate synthase subunit PdxT (199 aa).

52 to 54 (GES) is an L-glutamine binding site. C84 serves as the catalytic Nucleophile. Residues R115 and 143–144 (IR) each bind L-glutamine. Residues H179 and E181 each act as charge relay system in the active site.

The protein belongs to the glutaminase PdxT/SNO family. As to quaternary structure, in the presence of PdxS, forms a dodecamer of heterodimers. Only shows activity in the heterodimer.

The catalysed reaction is aldehydo-D-ribose 5-phosphate + D-glyceraldehyde 3-phosphate + L-glutamine = pyridoxal 5'-phosphate + L-glutamate + phosphate + 3 H2O + H(+). It carries out the reaction L-glutamine + H2O = L-glutamate + NH4(+). Its pathway is cofactor biosynthesis; pyridoxal 5'-phosphate biosynthesis. Functionally, catalyzes the hydrolysis of glutamine to glutamate and ammonia as part of the biosynthesis of pyridoxal 5'-phosphate. The resulting ammonia molecule is channeled to the active site of PdxS. This is Pyridoxal 5'-phosphate synthase subunit PdxT from Methanosarcina acetivorans (strain ATCC 35395 / DSM 2834 / JCM 12185 / C2A).